The following is an 857-amino-acid chain: Leucine--tRNA ligase (857 aa).

A 'HIGH' region motif is present at residues 42-52 (PYPSGRLHMGH). The short motif at 617-621 (KMSKS) is the 'KMSKS' region element. Lys620 is a binding site for ATP.

Belongs to the class-I aminoacyl-tRNA synthetase family.

It is found in the cytoplasm. It catalyses the reaction tRNA(Leu) + L-leucine + ATP = L-leucyl-tRNA(Leu) + AMP + diphosphate. This is Leucine--tRNA ligase from Vibrio parahaemolyticus serotype O3:K6 (strain RIMD 2210633).